The sequence spans 389 residues: Sedoheptulose-1,7-bisphosphatase, chloroplastic (389 aa).

Residues C115 and C120 are joined by a disulfide bond. Mg(2+)-binding residues include D126, E155, D173, L175, and D176. Residues 176-179 (DGSS), Y287, and K317 each bind substrate. Residue E323 coordinates Mg(2+).

It belongs to the FBPase class 1 family. As to quaternary structure, homodimer. Mg(2+) is required as a cofactor.

The protein localises to the plastid. Its subcellular location is the chloroplast. It carries out the reaction D-sedoheptulose 1,7-bisphosphate + H2O = D-sedoheptulose 7-phosphate + phosphate. It participates in carbohydrate biosynthesis; Calvin cycle. This chain is Sedoheptulose-1,7-bisphosphatase, chloroplastic (CSBP), found in Chlamydomonas reinhardtii (Chlamydomonas smithii).